The chain runs to 1114 residues: Kinesin-like protein KIN-12B (1114 aa).

The disordered stretch occupies residues 1 to 119 (MRSLFSSKLS…GGGGGDSGVQ (119 aa)). A compositionally biased stretch (low complexity) spans 98–107 (SAASPAPEGA). Residues 117–459 (GVQVVVRVRP…LRFAHRAKDI (343 aa)) enclose the Kinesin motor domain. Residue 197–204 (GQTGSGKT) participates in ATP binding. 2 coiled-coil regions span residues 772–810 (VLSA…KNQL) and 999–1043 (ELLV…DQEV). The span at 1055–1065 (LPSNVVQSPEP) shows a compositional bias: polar residues. The disordered stretch occupies residues 1055 to 1081 (LPSNVVQSPEPSETGPARYDTGGSFGD).

It belongs to the TRAFAC class myosin-kinesin ATPase superfamily. Kinesin family. KIN-12 subfamily.

In Oryza sativa subsp. japonica (Rice), this protein is Kinesin-like protein KIN-12B.